A 360-amino-acid chain; its full sequence is DNA replication and repair protein RecF (360 aa).

Residue 30–37 (GQNGSGKT) coordinates ATP.

This sequence belongs to the RecF family.

The protein localises to the cytoplasm. In terms of biological role, the RecF protein is involved in DNA metabolism; it is required for DNA replication and normal SOS inducibility. RecF binds preferentially to single-stranded, linear DNA. It also seems to bind ATP. The chain is DNA replication and repair protein RecF from Shewanella baltica (strain OS223).